A 285-amino-acid chain; its full sequence is 2-dehydro-3-deoxyphosphooctonate aldolase (285 aa).

The protein belongs to the KdsA family.

The protein resides in the cytoplasm. It catalyses the reaction D-arabinose 5-phosphate + phosphoenolpyruvate + H2O = 3-deoxy-alpha-D-manno-2-octulosonate-8-phosphate + phosphate. It functions in the pathway carbohydrate biosynthesis; 3-deoxy-D-manno-octulosonate biosynthesis; 3-deoxy-D-manno-octulosonate from D-ribulose 5-phosphate: step 2/3. Its pathway is bacterial outer membrane biogenesis; lipopolysaccharide biosynthesis. The protein is 2-dehydro-3-deoxyphosphooctonate aldolase of Bordetella parapertussis (strain 12822 / ATCC BAA-587 / NCTC 13253).